The following is a 302-amino-acid chain: Coiled-coil domain-containing protein 2 (302 aa).

A signal peptide spans 1 to 22 (MKNFGLLVVCLSLATLVIPSDG). A coiled-coil region spans residues 198-234 (FADAMEKKAEALENAAEAAAEYISDQSEEVDDLSEEV). Residues 221-257 (SDQSEEVDDLSEEVLDDDSDENDSTSSESEVEDSDVD) are disordered. A compositionally biased stretch (acidic residues) spans 223–257 (QSEEVDDLSEEVLDDDSDENDSTSSESEVEDSDVD). The N-linked (GlcNAc...) asparagine glycan is linked to N242.

Component of the acid-insoluble organic matrix of calcified layers of the shell (at protein level).

Its subcellular location is the secreted. The protein is Coiled-coil domain-containing protein 2 of Lottia gigantea (Giant owl limpet).